The chain runs to 717 residues: Patatin-like phospholipase domain-containing protein AO090003000839 (717 aa).

A helical membrane pass occupies residues 87–107 (WPFLFIVFGWITVLGFAYALT). Residues 277-468 (LCLSGGATFA…RTDIPIRALN (192 aa)) form the PNPLA domain. The short motif at 308–312 (GTSGG) is the GXSXG element. Catalysis depends on Ser-310, which acts as the Nucleophile. The active-site Proton acceptor is Asp-455. The segment at 620-696 (VSPAQSRRKR…STGNIFQEMR (77 aa)) is disordered. Positions 639–658 (MVERLDHNLPDRQPDNKEDL) are enriched in basic and acidic residues. Over residues 660–673 (DSSGIDSNVSSRDS) the composition is skewed to low complexity.

Belongs to the PLPL family.

The protein resides in the membrane. Functionally, probable lipid hydrolase. The sequence is that of Patatin-like phospholipase domain-containing protein AO090003000839 from Aspergillus oryzae (strain ATCC 42149 / RIB 40) (Yellow koji mold).